The chain runs to 224 residues: N-terminal Xaa-Pro-Lys N-methyltransferase 1-A (224 aa).

S-adenosyl-L-methionine is bound by residues glycine 70, arginine 75, 92–94 (DVT), 120–121 (LQ), and glutamine 136.

Belongs to the methyltransferase superfamily. NTM1 family.

It localises to the nucleus. The enzyme catalyses N-terminal L-alanyl-L-prolyl-L-lysyl-[protein] + 3 S-adenosyl-L-methionine = N-terminal N,N,N-trimethyl-L-alanyl-L-prolyl-L-lysyl-[protein] + 3 S-adenosyl-L-homocysteine + 3 H(+). The catalysed reaction is N-terminal L-seryl-L-prolyl-L-lysyl-[protein] + 3 S-adenosyl-L-methionine = N-terminal N,N,N-trimethyl-L-seryl-L-prolyl-L-lysyl-[protein] + 3 S-adenosyl-L-homocysteine + 3 H(+). It carries out the reaction N-terminal L-prolyl-L-prolyl-L-lysyl-[protein] + 2 S-adenosyl-L-methionine = N-terminal N,N-dimethyl-L-prolyl-L-prolyl-L-lysyl-[protein] + 2 S-adenosyl-L-homocysteine + 2 H(+). Its function is as follows. Distributive alpha-N-methyltransferase that methylates the N-terminus of target proteins containing the N-terminal motif [Ala/Gly/Pro/Ser]-Pro-Lys when the initiator Met is cleaved. Specifically catalyzes mono-, di- or tri-methylation of the exposed alpha-amino group of the Ala, Gly or Ser residue in the [Ala/Gly/Ser]-Pro-Lys motif and mono- or di-methylation of Pro in the Pro-Pro-Lys motif. Required during mitosis for normal bipolar spindle formation and chromosome segregation via its action on target proteins. The polypeptide is N-terminal Xaa-Pro-Lys N-methyltransferase 1-A (ntmt1-a) (Xenopus laevis (African clawed frog)).